An 855-amino-acid chain; its full sequence is Lon protease (855 aa).

The Lon N-terminal domain occupies 45 to 288 (IYLLTVKNVV…ETFRFLNIEY (244 aa)). An ATP-binding site is contributed by 439 to 446 (GPPGVGKT). The Lon proteolytic domain occupies 674-855 (IQVPGVVTGL…NEVIDLSIIK (182 aa)). Residues Ser761 and Lys804 contribute to the active site.

It belongs to the peptidase S16 family. As to quaternary structure, homohexamer. Organized in a ring with a central cavity.

Its subcellular location is the cytoplasm. The enzyme catalyses Hydrolysis of proteins in presence of ATP.. Its function is as follows. ATP-dependent serine protease that mediates the selective degradation of mutant and abnormal proteins as well as certain short-lived regulatory proteins. Required for cellular homeostasis and for survival from DNA damage and developmental changes induced by stress. Degrades polypeptides processively to yield small peptide fragments that are 5 to 10 amino acids long. Binds to DNA in a double-stranded, site-specific manner. This Karelsulcia muelleri (strain GWSS) (Sulcia muelleri) protein is Lon protease.